A 173-amino-acid chain; its full sequence is Superoxide dismutase [Cu-Zn] 2 (173 aa).

The N-terminal stretch at 1–19 (MKRLSLAMVTLLACAGAQA) is a signal peptide. Cu cation contacts are provided by H67, H69, and H92. Residues C74 and C169 are joined by a disulfide bond. Residues H92, H101, H109, and D112 each contribute to the Zn(2+) site. Residue H147 coordinates Cu cation.

Belongs to the Cu-Zn superoxide dismutase family. Monomer. Cu cation is required as a cofactor. Zn(2+) serves as cofactor.

It localises to the periplasm. The catalysed reaction is 2 superoxide + 2 H(+) = H2O2 + O2. In terms of biological role, destroys radicals which are normally produced within the cells and which are toxic to biological systems. This Salmonella typhimurium (strain LT2 / SGSC1412 / ATCC 700720) protein is Superoxide dismutase [Cu-Zn] 2 (sodC).